The primary structure comprises 328 residues: GGQPLQNKVQLKGRDLLTLKNFTGEEIKYILWLSADLKFRIKQKGEYLPLLQGKSLGMIFEKRSTRTRLSTETGFALLGGHPCFLTTQDIHLGVNESLKDTARVLSSMTDAVLARVYKQSDLDILAQEASIPIINGLSDLYHPIQILADYLTLQEHYGALKGLTLSWIGDGNNILHSIMMSAAKFGMHLQVATPKGYEPDPSITKLAEQYAKENGTNVSLTNDPLEAARGGNVLITDTWISMGQEEEKKKRLQAFQGYQVTMKTAEVAASDWTFLHCLPRKPEEVDDEVFYSPQSLVFPEAENRKWTIMAVMVSLLTDYSPQLQKPKF.

Residues 1–6 constitute a mitochondrion transit peptide; it reads GGQPLQ. N6-acetyllysine; alternate is present on K44. An N6-succinyllysine; alternate modification is found at K44. Residue K54 is modified to N6-succinyllysine. Position 62 is an N6-acetyllysine; alternate (K62). K62 is modified (N6-succinyllysine; alternate). 64 to 68 is a carbamoyl phosphate binding site; sequence STRTR. S107 is subject to Phosphoserine. Residue R115 participates in carbamoyl phosphate binding. R115 is a binding site for L-ornithine. An N6-acetyllysine; alternate modification is found at K118. Position 118 is an N6-succinyllysine; alternate (K118). Residue H142 participates in carbamoyl phosphate binding. Residue N173 participates in L-ornithine binding. N6-acetyllysine; alternate is present on residues K195, K205, and K212. An N6-succinyllysine; alternate mark is found at K195, K205, and K212. Residue 237 to 241 coordinates L-ornithine; that stretch reads DTWIS. 2 positions are modified to N6-succinyllysine: K248 and K263. 276 to 279 is a binding site for L-ornithine; that stretch reads HCLP. Residue C277 is part of the active site. Residue K281 is modified to N6-acetyllysine; alternate. An N6-succinyllysine; alternate modification is found at K281. A carbamoyl phosphate-binding site is contributed by R304. R304 provides a ligand contact to L-ornithine.

Belongs to the aspartate/ornithine carbamoyltransferase superfamily. OTCase family. As to quaternary structure, homotrimer. Post-translationally, acetylation at Lys-62 negatively regulates ornithine carbamoyltransferase activity in response to nutrient signals.

The protein localises to the mitochondrion matrix. The catalysed reaction is carbamoyl phosphate + L-ornithine = L-citrulline + phosphate + H(+). The protein operates within nitrogen metabolism; urea cycle; L-citrulline from L-ornithine and carbamoyl phosphate: step 1/1. With respect to regulation, negatively regulated by lysine acetylation. Functionally, catalyzes the second step of the urea cycle, the condensation of carbamoyl phosphate with L-ornithine to form L-citrulline. The urea cycle ensures the detoxification of ammonia by converting it to urea for excretion. The polypeptide is Ornithine transcarbamylase, mitochondrial (Sus scrofa (Pig)).